Here is a 105-residue protein sequence, read N- to C-terminus: MPHRNDRRKSASKAPNAIIHGRVASKKTIKKQLRNGKYSLKRLAEKGIHLDDIAMEIDNASKKNISKDKSLNENLFGKTEAGKQKDFMNIEPTCKGTILGAPPAL.

The span at 1 to 11 (MPHRNDRRKSA) shows a compositional bias: basic residues. Positions 1 to 20 (MPHRNDRRKSASKAPNAIIH) are disordered.

The protein belongs to the ALB1 family.

Its subcellular location is the nucleus. The protein localises to the nucleolus. This is an uncharacterized protein from Schizosaccharomyces pombe (strain 972 / ATCC 24843) (Fission yeast).